The following is a 443-amino-acid chain: Glutamyl-tRNA reductase (443 aa).

Substrate-binding positions include 49-52, Ser-109, 114-116, and Gln-120; these read TCNR and ETQ. Catalysis depends on Cys-50, which acts as the Nucleophile. Residue 189–194 participates in NADP(+) binding; it reads GAGDMS.

Belongs to the glutamyl-tRNA reductase family. In terms of assembly, homodimer.

It catalyses the reaction (S)-4-amino-5-oxopentanoate + tRNA(Glu) + NADP(+) = L-glutamyl-tRNA(Glu) + NADPH + H(+). Its pathway is porphyrin-containing compound metabolism; protoporphyrin-IX biosynthesis; 5-aminolevulinate from L-glutamyl-tRNA(Glu): step 1/2. Functionally, catalyzes the NADPH-dependent reduction of glutamyl-tRNA(Glu) to glutamate 1-semialdehyde (GSA). This chain is Glutamyl-tRNA reductase, found in Staphylococcus saprophyticus subsp. saprophyticus (strain ATCC 15305 / DSM 20229 / NCIMB 8711 / NCTC 7292 / S-41).